Consider the following 502-residue polypeptide: Protein DETOXIFICATION 55 (502 aa).

The next 12 helical transmembrane spans lie at 30–50 (IWDISFPVAAMSILNYLKNMT), 61–81 (LELAGGALAIGFTNITGYSVL), 112–132 (IFLLLLASLPISLLWLNLAPL), 145–165 (VASLYCSFSLPDLLANSFLHP), 185–205 (VSVLLHLPITAFFTFYISLGV), 207–227 (GVAVSSFLTNFISLSLLLCYI), 261–283 (VWSTLVKFAVPSCIAVCLEWWWY), 298–318 (VALAAAAIVIQTTSLMYTIPT), 344–364 (ATVAVGAAVAVSVFGLVGTTV), 378–398 (VVLELTAAVIPVIGACELANC), 419–439 (INFYAFYVVGAPVAVVLAFVW), and 447–467 (CYGLLGAQLACAISILTVVYN).

This sequence belongs to the multi antimicrobial extrusion (MATE) (TC 2.A.66.1) family.

The protein localises to the membrane. The protein is Protein DETOXIFICATION 55 of Arabidopsis thaliana (Mouse-ear cress).